A 202-amino-acid polypeptide reads, in one-letter code: Protein Nef (202 aa).

Glycine 2 carries the N-myristoyl glycine; by host lipid modification. Position 6 is a phosphoserine; by host (serine 6). The segment at glutamate 62–glutamate 65 is acidic; interacts with host PACS1 and PACS2; stabilizes the interaction of NEF/MHC-I with host AP1M1; necessary for MHC-I internalization. The interval proline 69 to proline 78 is SH3-binding; interaction with Src family tyrosine kinases. The PxxP; stabilizes the interaction of NEF/MHC-I with host AP1M1; necessary for MHC-I internalization signature appears at proline 72–proline 75. Positions aspartate 108 to tryptophan 124 are mediates dimerization, Nef-PTE1 interaction. Positions valine 148–valine 180 are binding to ATP6V1H. The short motif at leucine 164–leucine 165 is the Dileucine internalization motif; necessary for CD4 internalization element. A Diacidic; necessary for CD4 internalization motif is present at residues aspartate 174–aspartate 175.

This sequence belongs to the lentivirus primate group Nef protein family. As to quaternary structure, monomer; cytosolic form. Homodimer; membrane bound form. Interacts with Nef associated p21-activated kinase (PAK2); this interaction activates PAK2. Associates with the Nef-MHC-I-AP1 complex; this complex is required for MHC-I internalization. Interacts (via C-terminus) with host PI3-kinase. Interacts with host PACS1; this interaction seems to be weak. Interacts with host PACS2. Interacts with host LCK and MAPK3; these interactions inhibit the kinase activity of the latter. Interacts with host ATP6V1H; this interaction may play a role in CD4 endocytosis. Associates with the CD4-Nef-AP2 complex; this complex is required for CD4 internalization. Interacts with host AP2 subunit alpha and AP2 subunit sigma2. Interacts with TCR-zeta chain; this interaction up-regulates the Fas ligand (FasL) surface expression. Interacts with host HCK, LYN, and SRC; these interactions activate the Src family kinases. Interacts with MAP3K5; this interaction inhibits the Fas and TNFR-mediated death signals. Interacts with beta-COP and PTE1. Interacts with human RACK1; this increases Nef phosphorylation by PKC. Interacts with TP53; this interaction decreases the half-life of TP53, protecting the infected cell against p53-mediated apoptosis. The virion-associated Nef proteins are cleaved by the viral protease to release the soluble C-terminal core protein. Nef is probably cleaved concomitantly with viral structural proteins on maturation of virus particles. In terms of processing, myristoylated. Post-translationally, phosphorylated on serine residues, probably by host PKCdelta and theta.

The protein localises to the host cell membrane. The protein resides in the virion. Its subcellular location is the secreted. It is found in the host Golgi apparatus membrane. Its function is as follows. Factor of infectivity and pathogenicity, required for optimal virus replication. Alters numerous pathways of T-lymphocyte function and down-regulates immunity surface molecules in order to evade host defense and increase viral infectivity. Alters the functionality of other immunity cells, like dendritic cells, monocytes/macrophages and NK cells. In infected CD4(+) T-lymphocytes, down-regulates the surface MHC-I, mature MHC-II, CD4, CD28, CCR5 and CXCR4 molecules. Mediates internalization and degradation of host CD4 through the interaction of with the cytoplasmic tail of CD4, the recruitment of AP-2 (clathrin adapter protein complex 2), internalization through clathrin coated pits, and subsequent transport to endosomes and lysosomes for degradation. Diverts host MHC-I molecules to the trans-Golgi network-associated endosomal compartments by an endocytic pathway to finally target them for degradation. MHC-I down-regulation may involve AP-1 (clathrin adapter protein complex 1) or possibly Src family kinase-ZAP70/Syk-PI3K cascade recruited by PACS2. In consequence infected cells are masked for immune recognition by cytotoxic T-lymphocytes. Decreasing the number of immune receptors also prevents reinfection by more HIV particles (superinfection). Down-regulates host SERINC3 and SERINC5 thereby excluding these proteins from the viral particles. Virion infectivity is drastically higher when SERINC3 or SERINC5 are excluded from the viral envelope, because these host antiviral proteins impair the membrane fusion event necessary for subsequent virion penetration. Functionally, bypasses host T-cell signaling by inducing a transcriptional program nearly identical to that of anti-CD3 cell activation. Interaction with TCR-zeta chain up-regulates the Fas ligand (FasL). Increasing surface FasL molecules and decreasing surface MHC-I molecules on infected CD4(+) cells send attacking cytotoxic CD8+ T-lymphocytes into apoptosis. In terms of biological role, plays a role in optimizing the host cell environment for viral replication without causing cell death by apoptosis. Protects the infected cells from apoptosis in order to keep them alive until the next virus generation is ready to strike. Inhibits the Fas and TNFR-mediated death signals by blocking MAP3K5/ASK1. Decreases the half-life of TP53, protecting the infected cell against p53-mediated apoptosis. Inhibits the apoptotic signals regulated by the Bcl-2 family proteins through the formation of a Nef/PI3-kinase/PAK2 complex that leads to activation of PAK2 and induces phosphorylation of host BAD. Its function is as follows. Extracellular Nef protein targets CD4(+) T-lymphocytes for apoptosis by interacting with CXCR4 surface receptors. The chain is Protein Nef from Human immunodeficiency virus type 1 group M subtype B (isolate Lai) (HIV-1).